The primary structure comprises 257 residues: Type III pantothenate kinase (257 aa).

6–13 (DVGNTSTK) provides a ligand contact to ATP. 109-112 (GADR) is a binding site for substrate. Residue Asp-111 is the Proton acceptor of the active site. Asp-132 serves as a coordination point for K(+). An ATP-binding site is contributed by Thr-135. Residue Thr-187 participates in substrate binding.

The protein belongs to the type III pantothenate kinase family. In terms of assembly, homodimer. NH4(+) is required as a cofactor. It depends on K(+) as a cofactor.

It is found in the cytoplasm. It carries out the reaction (R)-pantothenate + ATP = (R)-4'-phosphopantothenate + ADP + H(+). The protein operates within cofactor biosynthesis; coenzyme A biosynthesis; CoA from (R)-pantothenate: step 1/5. Its function is as follows. Catalyzes the phosphorylation of pantothenate (Pan), the first step in CoA biosynthesis. The polypeptide is Type III pantothenate kinase (Anaplasma marginale (strain Florida)).